The primary structure comprises 295 residues: ATP-dependent (S)-NAD(P)H-hydrate dehydratase (295 aa).

Positions 9 to 289 (LLERARNLVP…DQIHQVFDDL (281 aa)) constitute a YjeF C-terminal domain. Residues Gly109 and 162-168 (NAIEFCR) each bind (6S)-NADPHX. Residues 193 to 197 (KGLND) and 214 to 223 (GSGRRCGGQG) contribute to the ATP site. (6S)-NADPHX is bound at residue Asp224.

The protein belongs to the NnrD/CARKD family. It depends on Mg(2+) as a cofactor.

It catalyses the reaction (6S)-NADHX + ATP = ADP + phosphate + NADH + H(+). The enzyme catalyses (6S)-NADPHX + ATP = ADP + phosphate + NADPH + H(+). Catalyzes the dehydration of the S-form of NAD(P)HX at the expense of ATP, which is converted to ADP. Together with NAD(P)HX epimerase, which catalyzes the epimerization of the S- and R-forms, the enzyme allows the repair of both epimers of NAD(P)HX, a damaged form of NAD(P)H that is a result of enzymatic or heat-dependent hydration. This chain is ATP-dependent (S)-NAD(P)H-hydrate dehydratase, found in Anopheles darlingi (Mosquito).